The sequence spans 583 residues: Laccase-21 (583 aa).

Residues 1-29 form the signal peptide; the sequence is MGIAKIPAVLWLLACAVLTFAVAISPAHG. 2 consecutive Plastocyanin-like domains span residues 39 to 155 and 165 to 323; these read FITE…PKHG and KEIP…YYTG. N-linked (GlcNAc...) asparagine glycosylation occurs at asparagine 85. The Cu cation site is built by histidine 89, histidine 91, histidine 134, and histidine 136. 7 N-linked (GlcNAc...) asparagine glycosylation sites follow: asparagine 282, asparagine 311, asparagine 384, asparagine 387, asparagine 399, asparagine 409, and asparagine 446. A Plastocyanin-like 3 domain is found at 436–567; that stretch reads FPNNPAPVFV…NTVFIVKDGK (132 aa). 8 residues coordinate Cu cation: histidine 484, histidine 487, histidine 489, histidine 546, cysteine 547, histidine 548, histidine 552, and methionine 557.

It belongs to the multicopper oxidase family. The cofactor is Cu cation.

The protein localises to the secreted. The protein resides in the extracellular space. Its subcellular location is the apoplast. The catalysed reaction is 4 hydroquinone + O2 = 4 benzosemiquinone + 2 H2O. Its function is as follows. Lignin degradation and detoxification of lignin-derived products. This Oryza sativa subsp. japonica (Rice) protein is Laccase-21 (LAC21).